A 332-amino-acid polypeptide reads, in one-letter code: D-galactose/methyl-galactoside binding periplasmic protein MglB (332 aa).

A signal peptide spans 1 to 23 (MNKKVLTLSAVMASMLFGAAAHA). 2 residues coordinate beta-D-galactose: D37 and N114. Residues D37 and N114 each coordinate beta-D-glucose. 5 residues coordinate Ca(2+): D157, N159, D161, Q163, and Q165. Beta-D-galactose contacts are provided by H175, D177, and R181. Residues H175, D177, and R181 each coordinate beta-D-glucose. E228 lines the Ca(2+) pocket. The beta-D-galactose site is built by N234, D259, and N279. 3 residues coordinate beta-D-glucose: N234, D259, and N279.

It belongs to the bacterial solute-binding protein 2 family. The ABC transporter complex is composed of one ATP-binding protein (MglA), two transmembrane proteins (MglC) and a solute-binding protein (MglB).

The protein resides in the periplasm. In terms of biological role, part of the ABC transporter complex MglABC involved in galactose/methyl galactoside import. In addition, binds D-galactose and D-glucose and plays a role in the chemotaxis towards these two sugars by interacting with the Trg chemoreceptor. In Escherichia coli O6:H1 (strain CFT073 / ATCC 700928 / UPEC), this protein is D-galactose/methyl-galactoside binding periplasmic protein MglB (mglB).